An 857-amino-acid chain; its full sequence is Gelation factor (857 aa).

Met-1 carries the blocked amino end (Met) modification. Positions 1 to 250 (MAAAPSGKTW…EKKRRETSDA (250 aa)) are actin-binding. Calponin-homology (CH) domains follow at residues 12–117 (DVQK…LRYQ) and 125–227 (NSPK…DYAL). The interval 229-246 (KEKRDADALAALEKKRRE) is regulatory site. Filamin repeat units lie at residues 245 to 346 (RETS…NVKI), 347 to 446 (DGSD…EVKI), 447 to 545 (LNSD…SIHI), 546 to 645 (KPAA…TVTV), 646 to 747 (KPAP…DVKC), and 763 to 837 (FTVA…KQVL). Residues 832–857 (PFKQVLGNPGKKNPEVKSFTTTRTAN) form a disordered region.

Homodimer.

Its function is as follows. F-actin cross-linking protein. The polypeptide is Gelation factor (abpC) (Dictyostelium discoideum (Social amoeba)).